We begin with the raw amino-acid sequence, 115 residues long: Inner membrane protein YidH (115 aa).

Residues 1-30 (MKISRLGEAPDYRFSLANERTFLAWIRTAL) are Cytoplasmic-facing. The helical transmembrane segment at 31–51 (GFLAAGVGLDQLAPDFATPVI) threads the bilayer. Residues 52-53 (RE) are Periplasmic-facing. The chain crosses the membrane as a helical span at residues 54–74 (LLALLLCLFSGGLAMYGYLRW). Topologically, residues 75 to 92 (LRNEKAMRLKEDLPYTNS) are cytoplasmic. Residues 93–113 (LLIISLILMVVAVIVMGLVLY) form a helical membrane-spanning segment. Topologically, residues 114–115 (AG) are periplasmic.

It to M.tuberculosis Rv2272.

Its subcellular location is the cell inner membrane. The protein is Inner membrane protein YidH (yidH) of Escherichia coli O157:H7.